A 676-amino-acid polypeptide reads, in one-letter code: UvrABC system protein C (676 aa).

Positions 16 to 95 (VEPGVYRFRD…IKEFDPRFNI (80 aa)) constitute a GIY-YIG domain. Residues 208-243 (DRLVRDLERKMTAAAEDLDFERAARLRDDIGALRRA) enclose the UVR domain.

Belongs to the UvrC family. Interacts with UvrB in an incision complex.

The protein resides in the cytoplasm. In terms of biological role, the UvrABC repair system catalyzes the recognition and processing of DNA lesions. UvrC both incises the 5' and 3' sides of the lesion. The N-terminal half is responsible for the 3' incision and the C-terminal half is responsible for the 5' incision. This Mycobacterium sp. (strain JLS) protein is UvrABC system protein C.